Here is a 187-residue protein sequence, read N- to C-terminus: uncharacterized protein (187 aa).

Positions 26 to 157 constitute a Nudix hydrolase domain; that stretch reads NRHAAVLLPI…YLDVSRRGQQ (132 aa). A Nudix box motif is present at residues 64–86; that stretch reads GVADPKDKSIIATALREAEEEVN. Residues Glu-80 and Glu-84 each coordinate Mg(2+).

The protein belongs to the Nudix hydrolase family. PCD1 subfamily. Mn(2+) is required as a cofactor. Mg(2+) serves as cofactor.

Probably mediates the hydrolysis of some nucleoside diphosphate derivatives. This is an uncharacterized protein from Photorhabdus laumondii subsp. laumondii (strain DSM 15139 / CIP 105565 / TT01) (Photorhabdus luminescens subsp. laumondii).